A 313-amino-acid chain; its full sequence is Phosphate import ATP-binding protein PstB 2 (313 aa).

Residues 1 to 33 show a composition bias toward polar residues; it reads MSDSINTEPSTDTQTNGERTVETTSPSAETTAG. Residues 1 to 40 are disordered; the sequence is MSDSINTEPSTDTQTNGERTVETTSPSAETTAGESEEQVR. An ABC transporter domain is found at 54 to 308; the sequence is LSVENLDVWY…PESQRVEDYI (255 aa). 86–93 contacts ATP; sequence GPSGCGKS.

This sequence belongs to the ABC transporter superfamily. Phosphate importer (TC 3.A.1.7) family. The complex is composed of two ATP-binding proteins (PstB), two transmembrane proteins (PstC and PstA) and a solute-binding protein (PstS).

It is found in the cell membrane. It carries out the reaction phosphate(out) + ATP + H2O = ADP + 2 phosphate(in) + H(+). Functionally, part of the ABC transporter complex PstSACB involved in phosphate import. Responsible for energy coupling to the transport system. The chain is Phosphate import ATP-binding protein PstB 2 from Haloarcula marismortui (strain ATCC 43049 / DSM 3752 / JCM 8966 / VKM B-1809) (Halobacterium marismortui).